The primary structure comprises 119 residues: MTRVKRGYIARKRRKKILAFVSGSRGAHSKLFRTANQRKARALVSAHRDRGKRKRDLRRLWITRINAAARANGVSYNRFIQYLYKRQLLPNRKTLAQIAVLDSNCFSTIFNNLSYDEIG.

It belongs to the bacterial ribosomal protein bL20 family.

The protein resides in the plastid. It localises to the chloroplast. Binds directly to 23S ribosomal RNA and is necessary for the in vitro assembly process of the 50S ribosomal subunit. It is not involved in the protein synthesizing functions of that subunit. This chain is Large ribosomal subunit protein bL20c (rpl20), found in Pinus thunbergii (Japanese black pine).